The following is a 293-amino-acid chain: Nucleotide-binding protein LBA0691 (293 aa).

An ATP-binding site is contributed by 13–20 (GMSGAGKT). 63–66 (DLRV) lines the GTP pocket.

Belongs to the RapZ-like family.

Its function is as follows. Displays ATPase and GTPase activities. The protein is Nucleotide-binding protein LBA0691 of Lactobacillus acidophilus (strain ATCC 700396 / NCK56 / N2 / NCFM).